The primary structure comprises 266 residues: MKTFAAYVIIACLSSTALAGSITENTSWNKEFSAEAVNGVFVLCKSSSKSCATNDLARASKEYLPASTFKIPNAIIGLETGVIKNEHQVFKWDGKPRAMKQWERDLTLRGAIQVSAVPVFQQIAREVGEVRMQKYLKKFSYGSQNISGGIDKFWLEDQLRISAVNQVEFLESLYLNKLSASKENQLIVKEALVTEAAPEYLVHSKTGFSGVGTESNPGVAWWVGWVEKETEVYFFAFNMDIDNESKLPLRKSIPTKIMESEGIIGG.

Residues 1-20 form the signal peptide; it reads MKTFAAYVIIACLSSTALAG. Serine 67 (acyl-ester intermediate) is an active-site residue. Lysine 70 is modified (N6-carboxylysine). Residue 205-207 participates in substrate binding; it reads KTG.

Belongs to the class-D beta-lactamase family.

It carries out the reaction a beta-lactam + H2O = a substituted beta-amino acid. Hydrolyzes carbenicillin, oxacillin and cephalosporin. Does not hydrolyze cefoxitin or carbapenems. This Pseudomonas aeruginosa protein is Beta-lactamase OXA-11 (bla).